The primary structure comprises 169 residues: Peptide methionine sulfoxide reductase MsrA (169 aa).

C10 is a catalytic residue.

It belongs to the MsrA Met sulfoxide reductase family.

It catalyses the reaction L-methionyl-[protein] + [thioredoxin]-disulfide + H2O = L-methionyl-(S)-S-oxide-[protein] + [thioredoxin]-dithiol. It carries out the reaction [thioredoxin]-disulfide + L-methionine + H2O = L-methionine (S)-S-oxide + [thioredoxin]-dithiol. Has an important function as a repair enzyme for proteins that have been inactivated by oxidation. Catalyzes the reversible oxidation-reduction of methionine sulfoxide in proteins to methionine. This Streptococcus pyogenes serotype M28 (strain MGAS6180) protein is Peptide methionine sulfoxide reductase MsrA.